Reading from the N-terminus, the 607-residue chain is Guanine nucleotide-binding protein-like 1 (607 aa).

Residues 1–14 show a composition bias toward basic residues; it reads MPRKKPFSVKQKKK. Residues 1–81 are disordered; that stretch reads MPRKKPFSVK…GPRGYDPNRY (81 aa). The segment covering 15–26 has biased composition (basic and acidic residues); it reads QLQDKRERKRGL. Residues S32, S33, and S34 each carry the phosphoserine modification. Residues T48 and T50 each carry the phosphothreonine modification. A phosphoserine mark is found at S51 and S68. A CP-type G domain is found at 178–418; the sequence is WRQLWRVLEM…LCDCPGLIFP (241 aa). A GTP-binding site is contributed by 225-228; sequence NKVD. S324 carries the phosphoserine modification. GTP-binding positions include 367–374 and 411–415; these read GFPNVGKS and DCPGL. Residues 544-607 are disordered; that stretch reads GRVGPAGDEE…PYALLGEGEC (64 aa). Residues 550-585 are compositionally biased toward acidic residues; sequence GDEEEEEEEELSSSCEEEGEEDRDADEEGEGDEDTP. 3 positions are modified to phosphoserine: S561, S562, and S563.

Belongs to the TRAFAC class YlqF/YawG GTPase family.

Possible regulatory or functional link with the histocompatibility cluster. This is Guanine nucleotide-binding protein-like 1 (Gnl1) from Rattus norvegicus (Rat).